We begin with the raw amino-acid sequence, 173 residues long: Placenta-specific protein 1 (173 aa).

The signal sequence occupies residues 1–23 (MNLRKFLGGTVLVAFMLFSYSEQ).

It belongs to the PLAC1 family. Expressed in placenta.

The protein resides in the secreted. May play a role in placental development. The chain is Placenta-specific protein 1 from Mus musculus (Mouse).